The sequence spans 106 residues: ATP-dependent Clp protease adapter protein ClpS (106 aa).

The protein belongs to the ClpS family. As to quaternary structure, binds to the N-terminal domain of the chaperone ClpA.

Its function is as follows. Involved in the modulation of the specificity of the ClpAP-mediated ATP-dependent protein degradation. The polypeptide is ATP-dependent Clp protease adapter protein ClpS (Salmonella arizonae (strain ATCC BAA-731 / CDC346-86 / RSK2980)).